Reading from the N-terminus, the 251-residue chain is Core protein VP8 (251 aa).

Positions methionine 1–glycine 32 are cleaved as a propeptide — removed by core protease OPG083/I7.

Belongs to the orthopoxvirus OPG098 family. Undergoes morphogenesis-associated proteolysis which cleaves the 28 kDa to a 25-kDa product. Proteolytic cleavage of major core proteins P4a (OPG136), P4b (OPG129), and VP8 (OPG098), which occurs at a late stage of core formation, is required for production of infectious mature virions (MV).

It localises to the virion. Its subcellular location is the host cytoplasm. In terms of biological role, major core structural protein. This is Core protein VP8 (OPG098) from Vaccinia virus (strain Copenhagen) (VACV).